Here is a 177-residue protein sequence, read N- to C-terminus: ATP synthase subunit b (177 aa).

Residues 15-35 (GISGGTIIYQLLMFIILLALL) traverse the membrane as a helical segment.

The protein belongs to the ATPase B chain family. In terms of assembly, F-type ATPases have 2 components, F(1) - the catalytic core - and F(0) - the membrane proton channel. F(1) has five subunits: alpha(3), beta(3), gamma(1), delta(1), epsilon(1). F(0) has three main subunits: a(1), b(2) and c(10-14). The alpha and beta chains form an alternating ring which encloses part of the gamma chain. F(1) is attached to F(0) by a central stalk formed by the gamma and epsilon chains, while a peripheral stalk is formed by the delta and b chains.

Its subcellular location is the cell membrane. In terms of biological role, f(1)F(0) ATP synthase produces ATP from ADP in the presence of a proton or sodium gradient. F-type ATPases consist of two structural domains, F(1) containing the extramembraneous catalytic core and F(0) containing the membrane proton channel, linked together by a central stalk and a peripheral stalk. During catalysis, ATP synthesis in the catalytic domain of F(1) is coupled via a rotary mechanism of the central stalk subunits to proton translocation. Functionally, component of the F(0) channel, it forms part of the peripheral stalk, linking F(1) to F(0). This chain is ATP synthase subunit b, found in Geobacillus kaustophilus (strain HTA426).